We begin with the raw amino-acid sequence, 464 residues long: ATP synthase subunit beta (464 aa).

153-160 contacts ATP; it reads GGAGVGKT.

Belongs to the ATPase alpha/beta chains family. F-type ATPases have 2 components, CF(1) - the catalytic core - and CF(0) - the membrane proton channel. CF(1) has five subunits: alpha(3), beta(3), gamma(1), delta(1), epsilon(1). CF(0) has three main subunits: a(1), b(2) and c(9-12). The alpha and beta chains form an alternating ring which encloses part of the gamma chain. CF(1) is attached to CF(0) by a central stalk formed by the gamma and epsilon chains, while a peripheral stalk is formed by the delta and b chains.

Its subcellular location is the cell membrane. It catalyses the reaction ATP + H2O + 4 H(+)(in) = ADP + phosphate + 5 H(+)(out). Its function is as follows. Produces ATP from ADP in the presence of a proton gradient across the membrane. The catalytic sites are hosted primarily by the beta subunits. The protein is ATP synthase subunit beta of Alkaliphilus oremlandii (strain OhILAs) (Clostridium oremlandii (strain OhILAs)).